We begin with the raw amino-acid sequence, 293 residues long: Pantothenate synthetase (293 aa).

38 to 45 (MGALHEGH) is a binding site for ATP. Residue His45 is the Proton donor of the active site. Position 69 (Gln69) interacts with (R)-pantoate. Residue Gln69 participates in beta-alanine binding. 155–158 (GEKD) is a binding site for ATP. A (R)-pantoate-binding site is contributed by Gln161. 192-195 (QSSR) contributes to the ATP binding site.

This sequence belongs to the pantothenate synthetase family. Homodimer.

It is found in the cytoplasm. It catalyses the reaction (R)-pantoate + beta-alanine + ATP = (R)-pantothenate + AMP + diphosphate + H(+). Its pathway is cofactor biosynthesis; (R)-pantothenate biosynthesis; (R)-pantothenate from (R)-pantoate and beta-alanine: step 1/1. Its function is as follows. Catalyzes the condensation of pantoate with beta-alanine in an ATP-dependent reaction via a pantoyl-adenylate intermediate. The polypeptide is Pantothenate synthetase (Hyphomonas neptunium (strain ATCC 15444)).